The following is a 155-amino-acid chain: NADPH-dependent 7-cyano-7-deazaguanine reductase (155 aa).

The Thioimide intermediate role is filled by cysteine 53. Aspartate 60 functions as the Proton donor in the catalytic mechanism. Residues valine 75–serine 77 and histidine 94–glutamate 95 contribute to the substrate site.

Belongs to the GTP cyclohydrolase I family. QueF type 1 subfamily.

The protein localises to the cytoplasm. The enzyme catalyses 7-aminomethyl-7-carbaguanine + 2 NADP(+) = 7-cyano-7-deazaguanine + 2 NADPH + 3 H(+). It participates in tRNA modification; tRNA-queuosine biosynthesis. Its function is as follows. Catalyzes the NADPH-dependent reduction of 7-cyano-7-deazaguanine (preQ0) to 7-aminomethyl-7-deazaguanine (preQ1). This chain is NADPH-dependent 7-cyano-7-deazaguanine reductase, found in Ruegeria pomeroyi (strain ATCC 700808 / DSM 15171 / DSS-3) (Silicibacter pomeroyi).